A 132-amino-acid chain; its full sequence is MSGKGKVHGGKGKSSETAKSTTSHSARAGLQFPVGRIKRYLKRTAQNKIRVGSKSAIYLTAVLEYLTAEVLELAGNAAKDLKVKRITPRHLQLAIRGDEELDNLIKATIAFGGVLPHINKALLLKVEKKKQK.

Basic residues predominate over residues 1-11 (MSGKGKVHGGK). Residues 1–27 (MSGKGKVHGGKGKSSETAKSTTSHSAR) are disordered. N-acetylserine is present on S2. N6-acetyllysine is present on residues K4, K11, and K13.

It belongs to the histone H2A family. The nucleosome is a histone octamer containing two molecules each of H2A, H2B, H3 and H4 assembled in one H3-H4 heterotetramer and two H2A-H2B heterodimers. The octamer wraps approximately 147 bp of DNA. H2A or its variant H2A.Z forms a heterodimer with H2B. H2A.Z associates with the VPS72/SWC2 subunit of the SWR1 chromatin remodeling complex. Also interacts with RBP1/DNA-directed RNA polymerase II largest subunit. Acetylated once deposited into chromatin.

It localises to the nucleus. Its subcellular location is the chromosome. Functionally, variant histone H2A which can replace H2A in some nucleosomes. Nucleosomes wrap and compact DNA into chromatin, limiting DNA accessibility to the cellular machineries which require DNA as a template. Histones thereby play a central role in transcription regulation, DNA repair, DNA replication and chromosomal stability. DNA accessibility is regulated via a complex set of post-translational modifications of histones, also called histone code, and nucleosome remodeling. This variant is enriched at promoters, it may keep them in a repressed state until the appropriate activation signal is received. Near telomeres, it may counteract gene silencing caused by the spread of heterochromatin proteins. Required for the RNA polymerase II and SPT15/TBP recruitment to the target genes. Involved in chromosome stability. This is Histone H2A.Z (HTZ1) from Debaryomyces hansenii (strain ATCC 36239 / CBS 767 / BCRC 21394 / JCM 1990 / NBRC 0083 / IGC 2968) (Yeast).